A 442-amino-acid polypeptide reads, in one-letter code: Membrane sensor protein UhpC (442 aa).

At 1–30 (MLSFLKAPANAPLITDKHEVDARYRYWRRH) the chain is on the cytoplasmic side. The helical transmembrane segment at 31–51 (ILITIWLGYALFYFTRKSFNA) threads the bilayer. The Periplasmic segment spans residues 52–66 (AAPEILASGILTRSD). The chain crosses the membrane as a helical span at residues 67-87 (IGLLATLFYITYGVSKFVSGI). Residues 88–95 (VSDRSNAR) lie on the Cytoplasmic side of the membrane. Residues 96–118 (YFMGIGLIATGVVNILFGFSTSL) traverse the membrane as a helical segment. The Periplasmic portion of the chain corresponds to 119–121 (WAF). A helical membrane pass occupies residues 122-144 (ALLWALNAFFQGFGSPVCARLLT). The Cytoplasmic portion of the chain corresponds to 145 to 162 (AWYSRTERGGWWALWNTA). The helical transmembrane segment at 163-183 (HNVGGALIPLVMAAVALHYGW) threads the bilayer. Position 184 (Arg184) is a topological domain, periplasmic. A helical membrane pass occupies residues 185-205 (VGMMVAGLLAIGVGMVLCWRL). At 206–244 (RDRPQAIGLPPVGDWRHDALEVAQQQEGAGLSRKEILAK) the chain is on the cytoplasmic side. A helical transmembrane segment spans residues 245 to 265 (YVLLNPYIWLLSLCYVLVYVV). Topologically, residues 266 to 289 (RAAINDWGNLYMSETLGVDLVTAN) are periplasmic. The chain crosses the membrane as a helical span at residues 290 to 310 (TAVSMFELGGFIGALVAGWGS). The Cytoplasmic portion of the chain corresponds to 311–322 (DKLFNGNRGPMN). Residues 323 to 343 (LIFAAGILLSVGSLWLMPFAS) traverse the membrane as a helical segment. Topologically, residues 344-347 (YVMQ) are periplasmic. The chain crosses the membrane as a helical span at residues 348–368 (AACFFTTGFFVFGPQMLIGMA). Topologically, residues 369-379 (AAECSHKEAAG) are cytoplasmic. The chain crosses the membrane as a helical span at residues 380–400 (AATGFVGLFAYLGASLSGWPL). Topologically, residues 401-410 (AKVLEIWHWT) are periplasmic. A helical transmembrane segment spans residues 411–431 (GFFAVIAIAAGISALLLLPFL). Residues 432-442 (NAQAPRETHEA) lie on the Cytoplasmic side of the membrane.

The protein belongs to the major facilitator superfamily. Organophosphate:Pi antiporter (OPA) (TC 2.A.1.4) family.

It is found in the cell inner membrane. Its function is as follows. Part of the UhpABC signaling cascade that controls the expression of the hexose phosphate transporter UhpT. UhpC senses external glucose-6-phosphate and interacts with the histidine kinase UhpB, leading to the stimulation of the autokinase activity of UhpB. The sequence is that of Membrane sensor protein UhpC (uhpC) from Salmonella typhimurium (strain LT2 / SGSC1412 / ATCC 700720).